Reading from the N-terminus, the 710-residue chain is Solute carrier organic anion transporter family member 3A1 (710 aa).

N-acetylmethionine is present on Met1. Residues 1–25 (MQAKKPGGSSGGGRSGELQGDEAQR) form a disordered region. The Cytoplasmic portion of the chain corresponds to 1–40 (MQAKKPGGSSGGGRSGELQGDEAQRNKKKKKKVSCFSNIK). A helical transmembrane segment spans residues 41-60 (IFLVSECALMLAQGTVGAYL). The Extracellular segment spans residues 61–79 (VSVLTTLERRFNLQSADVG). The helical transmembrane segment at 80-100 (VIASSFEIGNLALILFVSYFG) threads the bilayer. The Cytoplasmic segment spans residues 101–106 (ARGHRP). The helical transmembrane segment at 107-131 (RLIGCGGIVMALGALLSALPEFLTH) threads the bilayer. Residues 132-174 (QYKYEAGEIRWGAEGRDVCAANGSGGDQGPDPDLICRSRTATN) are Extracellular-facing. An N-linked (GlcNAc...) asparagine glycan is attached at Asn153. Residues 175–203 (MMYLLLIGAQVLLGIGATPVQPLGVSYID) form a helical membrane-spanning segment. Residues 204-222 (DHVRRKDSSLYIGILFTML) are Cytoplasmic-facing. Residues 223-243 (VFGPACGFILGSFCTKIYVDA) form a helical membrane-spanning segment. Over 244-261 (VFIDTSNLDITPDDPRWI) the chain is Extracellular. The helical transmembrane segment at 262–286 (GAWWGGFLLCGALLFFSSVLMFGFP) threads the bilayer. Over 287 to 344 (QSLPPHSDPALESEQAMLPEREYERPKPSNGVLRHPLEPDSSASCFQQLRVIPKVTKH) the chain is Cytoplasmic. The chain crosses the membrane as a helical span at residues 345–366 (LLSNPVFTCIILAACMEIAVVA). Residues 367 to 386 (GFAAFLGKYLEQQFNLTTSS) lie on the Extracellular side of the membrane. N-linked (GlcNAc...) asparagine glycosylation occurs at Asn381. The chain crosses the membrane as a helical span at residues 387–410 (ANQLLGMTAIPCACLGIFLGGLLV). Residues 411–414 (KKLS) are Cytoplasmic-facing. The chain crosses the membrane as a helical span at residues 415 to 438 (LSALGAIRMAMLVNLVSTACYVSF). The Extracellular segment spans residues 439–539 (LFLGCDTGPV…PGCQEAFLTF (101 aa)). Residue Asn457 is glycosylated (N-linked (GlcNAc...) asparagine). Positions 465–513 (LDPYSSCNKNCECQTDSFTPVCGADGITYLSACFAGCNSTNLTGCACLM) constitute a Kazal-like domain. 3 disulfide bridges follow: Cys471–Cys501, Cys477–Cys497, and Cys486–Cys511. Asn502, Asn505, and Asn519 each carry an N-linked (GlcNAc...) asparagine glycan. Residues 540 to 562 (LCVMCVCSMIGAMAQTPSVIILI) form a helical membrane-spanning segment. Topologically, residues 563-571 (RTVSPELKS) are cytoplasmic. A helical transmembrane segment spans residues 572 to 597 (YALGVLFLLLRLLGFIPPPLIFGAGI). At 598-630 (DSTCLFWSTFCGEQGACALYDNVAYRYLYVSIA) the chain is on the extracellular side. Residues 631-648 (IALKSFAFLLYTTTWQCL) traverse the membrane as a helical segment. The Cytoplasmic segment spans residues 649–705 (RKNYKRYIKNHEGGLSTSEFFASTLTLDNLGRDPVPANQTHRTKFIYNLEDHEWCEN).

This sequence belongs to the organo anion transporter (TC 2.A.60) family.

It localises to the basolateral cell membrane. The protein resides in the apical cell membrane. Its subcellular location is the basal cell membrane. It carries out the reaction L-thyroxine(out) = L-thyroxine(in). The catalysed reaction is prostaglandin E1(out) = prostaglandin E1(in). It catalyses the reaction prostaglandin E2(out) = prostaglandin E2(in). The enzyme catalyses prostaglandin F2alpha(out) = prostaglandin F2alpha(in). It carries out the reaction (5Z,8Z,11Z,14Z)-eicosatetraenoate(out) = (5Z,8Z,11Z,14Z)-eicosatetraenoate(in). The catalysed reaction is taurocholate(out) = taurocholate(in). It catalyses the reaction glycocholate(out) = glycocholate(in). The enzyme catalyses estrone 3-sulfate(out) = estrone 3-sulfate(in). It carries out the reaction argipressin(out) = argipressin(in). Functionally, putative organic anion antiporter with apparent broad substrate specificity. Recognizes various substrates including thyroid hormone L-thyroxine, prostanoids such as prostaglandin E1 and E2, bile acids such as taurocholate, glycolate and glycochenodeoxycholate and peptide hormones such as L-arginine vasopressin, likely operating in a tissue-specific manner. The transport mechanism, its electrogenicity and potential tissue-specific counterions remain to be elucidated. The chain is Solute carrier organic anion transporter family member 3A1 (SLCO3A1) from Bos taurus (Bovine).